A 512-amino-acid polypeptide reads, in one-letter code: Methionine--tRNA ligase (512 aa).

The short motif at 11–21 (YYASGKPHIGH) is the 'HIGH' region element. Zn(2+) contacts are provided by cysteine 126, cysteine 129, cysteine 143, and histidine 147. The short motif at 301-305 (KMSKS) is the 'KMSKS' region element. Lysine 304 lines the ATP pocket.

The protein belongs to the class-I aminoacyl-tRNA synthetase family. MetG type 2A subfamily. Monomer. Zn(2+) is required as a cofactor.

Its subcellular location is the cytoplasm. It catalyses the reaction tRNA(Met) + L-methionine + ATP = L-methionyl-tRNA(Met) + AMP + diphosphate. In terms of biological role, is required not only for elongation of protein synthesis but also for the initiation of all mRNA translation through initiator tRNA(fMet) aminoacylation. This chain is Methionine--tRNA ligase (metG), found in Mycoplasma pneumoniae (strain ATCC 29342 / M129 / Subtype 1) (Mycoplasmoides pneumoniae).